The sequence spans 215 residues: Cytochrome b6 (215 aa).

The Cytoplasmic segment spans residues 1–31; that stretch reads MANVYDWFQERLEIQALADDVTSKYVPPHVN. The chain crosses the membrane as a helical span at residues 32-52; sequence IFYCLGGITLTCFLIQFATGF. Heme c is bound at residue Cys-35. Topologically, residues 53 to 89 are lumenal, thylakoid; the sequence is AMTFYYKPTVTEAYASVQYIMNEVSFGWLIRSIHRWS. The heme b site is built by Arg-83, His-86, His-100, and Arg-103. The chain crosses the membrane as a helical span at residues 90–110; sequence ASMMVLMMILHVFRVYLTGGF. The Cytoplasmic segment spans residues 111–115; that stretch reads KKPRE. The chain crosses the membrane as a helical span at residues 116–136; it reads LTWISGVILAVITVSFGVTGY. Topologically, residues 137-185 are lumenal, thylakoid; the sequence is SLPWDQVGYWAVKIVSGVPEAIPVVGVLISDLLRGGSSVGQATLTRYYS. A helical membrane pass occupies residues 186 to 206; the sequence is AHTFVLPWLIAVFMLLHFLMI. Residues His-187 and His-202 each coordinate heme b. At 207-215 the chain is on the cytoplasmic side; it reads RKQGISGPL. Lys-208 is a binding site for heme c.

This sequence belongs to the cytochrome b family. PetB subfamily. The 4 large subunits of the cytochrome b6-f complex are cytochrome b6, subunit IV (17 kDa polypeptide, PetD), cytochrome f and the Rieske protein, while the 4 small subunits are PetG, PetL, PetM and PetN. The complex functions as a dimer. Requires heme b as cofactor. It depends on heme c as a cofactor.

Its subcellular location is the cellular thylakoid membrane. Component of the cytochrome b6-f complex, which mediates electron transfer between photosystem II (PSII) and photosystem I (PSI), cyclic electron flow around PSI, and state transitions. The polypeptide is Cytochrome b6 (Mastigocladus laminosus (Fischerella sp.)).